Consider the following 140-residue polypeptide: Nucleoside diphosphate kinase (140 aa).

ATP contacts are provided by Lys-11, Phe-59, Arg-87, Thr-93, Arg-104, and Asn-114. The active-site Pros-phosphohistidine intermediate is the His-117.

It belongs to the NDK family. As to quaternary structure, homotetramer. It depends on Mg(2+) as a cofactor.

It is found in the cytoplasm. The catalysed reaction is a 2'-deoxyribonucleoside 5'-diphosphate + ATP = a 2'-deoxyribonucleoside 5'-triphosphate + ADP. It catalyses the reaction a ribonucleoside 5'-diphosphate + ATP = a ribonucleoside 5'-triphosphate + ADP. Functionally, major role in the synthesis of nucleoside triphosphates other than ATP. The ATP gamma phosphate is transferred to the NDP beta phosphate via a ping-pong mechanism, using a phosphorylated active-site intermediate. In Roseobacter denitrificans (strain ATCC 33942 / OCh 114) (Erythrobacter sp. (strain OCh 114)), this protein is Nucleoside diphosphate kinase.